The sequence spans 411 residues: 2,3-bisphosphoglycerate-independent phosphoglycerate mutase (411 aa).

This sequence belongs to the BPG-independent phosphoglycerate mutase family. A-PGAM subfamily.

It carries out the reaction (2R)-2-phosphoglycerate = (2R)-3-phosphoglycerate. It functions in the pathway carbohydrate degradation; glycolysis; pyruvate from D-glyceraldehyde 3-phosphate: step 3/5. Catalyzes the interconversion of 2-phosphoglycerate and 3-phosphoglycerate. The protein is 2,3-bisphosphoglycerate-independent phosphoglycerate mutase of Pyrobaculum neutrophilum (strain DSM 2338 / JCM 9278 / NBRC 100436 / V24Sta) (Thermoproteus neutrophilus).